A 202-amino-acid chain; its full sequence is MTSTQSVAVCATLILAIFCVNDIHCDPIAEARAAAFGEREARSDGEWKQFDVNGEKIEVNEQENREIIRQAGGDGVEGSVMVIDHAKGLISWSIPRAGECYLIGGVDKQLPDAQELLHYFQSAQGSADGEGVESALDYVKAEDRPVTDLNLLAPEVREACQGKSVYWLEKSSGDNNEPEKRRWCVYAYVRVRGVLVRYRRCW.

Positions 1-25 (MTSTQSVAVCATLILAIFCVNDIHC) are cleaved as a signal peptide. The propeptide occupies 26 to 181 (DPIAEARAAA…SGDNNEPEKR (156 aa)). The region spanning 73 to 168 (GDGVEGSVMV…ACQGKSVYWL (96 aa)) is the BRICHOS domain. Disulfide bonds link Cys-100–Cys-160 and Cys-184–Cys-201.

Has antimicrobial activity against the Gram-negative bacteria E.coli and P.mirabilis, the Gram-positive bacterium L.monocytogenes and the yeast C.albicans. The chain is Arenicin-1 from Arenicola marina (Lugworm).